The sequence spans 123 residues: Holo-[acyl-carrier-protein] synthase (123 aa).

2 residues coordinate Mg(2+): Asp8 and Glu56.

The protein belongs to the P-Pant transferase superfamily. AcpS family. Mg(2+) serves as cofactor.

The protein localises to the cytoplasm. It catalyses the reaction apo-[ACP] + CoA = holo-[ACP] + adenosine 3',5'-bisphosphate + H(+). Its function is as follows. Transfers the 4'-phosphopantetheine moiety from coenzyme A to a Ser of acyl-carrier-protein. This Clostridium botulinum (strain Alaska E43 / Type E3) protein is Holo-[acyl-carrier-protein] synthase.